The chain runs to 268 residues: MGEGTPGVDSARVQEEGGRDQSLGFVEGRIQVGRIVTAGQLSLCSEEQSPQPGITRPSPGVVVDGESSGLAEPRVEATPQPPSSIQKRKRDESLDSEDDLAELFEPDPQPVWSVEMLCGLRMRLKRRRVSTVRPEHHKVFTKLLEDPVVKKFLTWDKMLRVSDKYLLSMVIAYFSRAGLFSWQYRPIHFFLALYLANDMEEDNQAPKQDIFYFLYGKSYAQRPMFHKLRFQFIRSMGWKIWVSREECEEIQAYNPDLWVWARDRTNLT.

Disordered stretches follow at residues 1-26 (MGEG…LGFV) and 43-97 (LCSE…LDSE). The segment covering 43 to 52 (LCSEEQSPQP) has biased composition (polar residues). A speedy/Ringo box; Required for CDK-binding region spans residues 134-265 (PEHHKVFTKL…DLWVWARDRT (132 aa)).

This sequence belongs to the Speedy/Ringo family. Interacts with CDK1. Does not interact with CDK2 in vivo. Testis-specific.

It localises to the nucleus. Promotes progression through the cell cycle via binding and activation of CDK1. This chain is Speedy protein E4A, found in Mus musculus (Mouse).